The sequence spans 285 residues: PHO85 cyclin-7 (285 aa).

The span at 1–14 (MELSSPSKKTTTSP) shows a compositional bias: low complexity. Residues 1–42 (MELSSPSKKTTTSPINIPGGNRDNLIIGPHSHSFKTDPFSSN) form a disordered region. Serine 69 bears the Phosphoserine mark.

Belongs to the cyclin family. PHO80 subfamily. Forms a cyclin-CDK complex with PHO85. Interacts with the substrate proteins MMR1 and YJL084C. Interacts with the CDK inhibitor (CKI) PHO81.

The protein resides in the cytoplasm. With respect to regulation, the PCL7-PHO85 cyclin-CDK is inhibited by PHO81 in low-phosphate conditions. In terms of biological role, cyclin partner of the cyclin-dependent kinase (CDK) PHO85. Together with cyclin PCL6, controls glycogen phosphorylase and glycogen synthase activities in response to nutrient availablility. The PCL7-PHO85 cyclin-CDK holoenzyme has GLC8 kinase activity and phosphorylates and inactivates the phosphatase PP1-2 inhibitor GLC8, causing activation of PP1-2, which then dephosphorylates and activates glycogen phosphorylase. PCL7-PHO85 also phosphorylates MMR1 and YJL084C. The protein is PHO85 cyclin-7 (PCL7) of Saccharomyces cerevisiae (strain ATCC 204508 / S288c) (Baker's yeast).